A 665-amino-acid polypeptide reads, in one-letter code: Cysteine-rich receptor-like protein kinase 41 (665 aa).

Residues 1-27 (MTSSCSLSRPQHLFFFFFLFVPFLSLG) form the signal peptide. Residues 28 to 280 (QQISVDINSA…DPKPGNDKVK (253 aa)) lie on the Extracellular side of the membrane. Gnk2-homologous domains are found at residues 42–148 (PSNP…DKPI) and 154–260 (TSPV…SDLR). Residues N120, N165, and N236 are each glycosylated (N-linked (GlcNAc...) asparagine). Residues 281 to 301 (IIIATVCSVIGFAIIAVFLYF) traverse the membrane as a helical segment. The Cytoplasmic portion of the chain corresponds to 302 to 665 (FMTRNRRTAK…DVTITEFDAR (364 aa)). Positions 344 to 624 (FSRDNQLGEG…VVMLNANSFT (281 aa)) constitute a Protein kinase domain. Residues 350–358 (LGEGGFGAV) and K372 each bind ATP. Y417 is modified (phosphotyrosine). D469 acts as the Proton acceptor in catalysis. At S473 the chain carries Phosphoserine. Phosphothreonine is present on T511. Y519 carries the phosphotyrosine modification.

Belongs to the protein kinase superfamily. Ser/Thr protein kinase family. CRK subfamily.

Its subcellular location is the membrane. It carries out the reaction L-seryl-[protein] + ATP = O-phospho-L-seryl-[protein] + ADP + H(+). It catalyses the reaction L-threonyl-[protein] + ATP = O-phospho-L-threonyl-[protein] + ADP + H(+). The sequence is that of Cysteine-rich receptor-like protein kinase 41 (CRK41) from Arabidopsis thaliana (Mouse-ear cress).